A 200-amino-acid polypeptide reads, in one-letter code: Small ribosomal subunit protein uS4 (200 aa).

Residues 22–42 form a disordered region; the sequence is TGKELEKRPYAPGPHGPNQRK. The S4 RNA-binding domain maps to 92–152; it reads ARLDNLVYRM…EKSNSLVVVK (61 aa).

It belongs to the universal ribosomal protein uS4 family. In terms of assembly, part of the 30S ribosomal subunit. Contacts protein S5. The interaction surface between S4 and S5 is involved in control of translational fidelity.

Functionally, one of the primary rRNA binding proteins, it binds directly to 16S rRNA where it nucleates assembly of the body of the 30S subunit. With S5 and S12 plays an important role in translational accuracy. In Bacillus cereus (strain B4264), this protein is Small ribosomal subunit protein uS4.